The following is a 451-amino-acid chain: Chromosomal replication initiator protein DnaA (451 aa).

A domain I, interacts with DnaA modulators region spans residues 1–101; that stretch reads MTENETIFWN…TSNHIFSRQT (101 aa). Positions 101–110 are domain II; sequence TINSLPAITS. Positions 111–329 are domain III, AAA+ region; that stretch reads DLNPKYSFDN…GALKDISLVA (219 aa). Residues Gly-155, Gly-157, Lys-158, and Thr-159 each contribute to the ATP site. The domain IV, binds dsDNA stretch occupies residues 330–451; that stretch reads NFKEIDKITV…EIETIKNKIK (122 aa).

It belongs to the DnaA family. In terms of assembly, oligomerizes as a right-handed, spiral filament on DNA at oriC.

It is found in the cytoplasm. In terms of biological role, plays an essential role in the initiation and regulation of chromosomal replication. ATP-DnaA binds to the origin of replication (oriC) to initiate formation of the DNA replication initiation complex once per cell cycle. Binds the DnaA box (a 9 base pair repeat at the origin) and separates the double-stranded (ds)DNA. Forms a right-handed helical filament on oriC DNA; dsDNA binds to the exterior of the filament while single-stranded (ss)DNA is stabiized in the filament's interior. The ATP-DnaA-oriC complex binds and stabilizes one strand of the AT-rich DNA unwinding element (DUE), permitting loading of DNA polymerase. After initiation quickly degrades to an ADP-DnaA complex that is not apt for DNA replication. Binds acidic phospholipids. The sequence is that of Chromosomal replication initiator protein DnaA from Streptococcus uberis (strain ATCC BAA-854 / 0140J).